We begin with the raw amino-acid sequence, 274 residues long: uncharacterized protein (274 aa).

It is found in the plastid. It localises to the chloroplast. This is an uncharacterized protein from Euglena gracilis.